Reading from the N-terminus, the 426-residue chain is Zona pellucida sperm-binding protein 3 (426 aa).

A signal peptide spans 1 to 22 (MGLSYGIFICFLLLGGMELCCP). A Pyrrolidone carboxylic acid modification is found at Gln23. The Extracellular portion of the chain corresponds to 23-385 (QTIWPTETYY…IEGSTSPHTS (363 aa)). The ZP domain maps to 43–305 (DCLESQLVVT…KACSFIKSTK (263 aa)). 2 disulfide bridges follow: Cys44–Cys138 and Cys76–Cys97. 2 N-linked (GlcNAc...) asparagine glycosylation sites follow: Asn123 and Asn145. O-linked (GalNAc...) threonine glycosylation is found at Thr154, Thr160, and Thr161. 2 disulfide bridges follow: Cys215–Cys280 and Cys237–Cys298. The N-linked (GlcNAc...) asparagine glycan is linked to Asn244. The propeptide at 351 to 426 (RRHVTEEAEI…PVICPASVSQ (76 aa)) is removed in mature form. The chain crosses the membrane as a helical span at residues 386–406 (VMLGLGLATVVSLTLATIVLV). Residues 407-426 (LAKRHRTASHPVICPASVSQ) lie on the Cytoplasmic side of the membrane.

Belongs to the ZP domain family. ZPC subfamily. As to quaternary structure, polymers of ZP2 and ZP3 organized into long filaments cross-linked by ZP1 homodimers. Interacts with ZP1 and ZP2. In terms of processing, proteolytically cleaved before the transmembrane segment to yield the secreted ectodomain incorporated in the zona pellucida. Post-translationally, N-glycosylated. O-glycosylated; removal of O-linked glycans may play an important role in the post-fertilization block to polyspermy. In terms of tissue distribution, expressed in oocytes.

The protein resides in the zona pellucida. Its subcellular location is the cell membrane. In terms of biological role, component of the zona pellucida, an extracellular matrix surrounding oocytes which mediates sperm binding, induction of the acrosome reaction and prevents post-fertilization polyspermy. The zona pellucida is composed of 3 to 4 glycoproteins, ZP1, ZP2, ZP3, and ZP4. ZP3 is essential for sperm binding and zona matrix formation. This Canis lupus familiaris (Dog) protein is Zona pellucida sperm-binding protein 3 (ZP3).